Here is a 1503-residue protein sequence, read N- to C-terminus: Lysophospholipase NTE1 (1503 aa).

The Cytoplasmic portion of the chain corresponds to 1–25; the sequence is MDSSTAALATASAKLDAVAQQGSSS. Residues 26–46 traverse the membrane as a helical segment; the sequence is WIGFFANIILGIISLVYSILY. At 47-71 the chain is on the lumenal side; the sequence is SVLKLTTFSIPSLLYTLFSTSLTVT. Residues 72–92 traverse the membrane as a helical segment; the sequence is MNATTLMLIIVLVFSLVSWFV. The Cytoplasmic segment spans residues 93 to 1503; that stretch reads RYRYLNMYSR…RTMAPRRASI (1411 aa). Disordered stretches follow at residues 252-348, 454-561, and 722-745; these read RHGG…TTSV, TKGI…SNPF, and KNES…RFMD. Composition is skewed to polar residues over residues 262–272, 285–302, 487–496, 506–542, 552–561, and 723–737; these read TSATETYTSSR, STVS…SSHG, QRPSSVTASP, KHTS…STLL, PLSQRTSNPF, and NESS…QQGS. Residues 658–777 and 821–941 each bind a nucleoside 3',5'-cyclic phosphate; these read GLPV…GYVG and RLTN…IASR. Positions 1200 to 1364 constitute a PNPLA domain; the sequence is LVLGGGGARG…IDNLTVSHMK (165 aa). Positions 1204 to 1209 match the GXGXXG motif; that stretch reads GGGARG. Positions 1231-1235 match the GXSXG motif; it reads GTSIG. Serine 1233 serves as the catalytic Nucleophile. The active-site Proton acceptor is the aspartate 1351. The short motif at 1351–1353 is the DGA/G element; it reads DGG.

The protein belongs to the NTE family.

The protein resides in the endoplasmic reticulum membrane. The catalysed reaction is a 1-acyl-sn-glycero-3-phosphocholine + H2O = sn-glycerol 3-phosphocholine + a fatty acid + H(+). With respect to regulation, inhibited by organophosphorus esters. Functionally, intracellular phospholipase B that catalyzes the double deacylation of phosphatidylcholine (PC) to glycerophosphocholine (GroPCho). Plays an important role in membrane lipid homeostasis. Responsible for the rapid PC turnover in response to inositol, elevated temperatures, or when choline is present in the growth medium. The polypeptide is Lysophospholipase NTE1 (NTE1) (Pyricularia oryzae (strain 70-15 / ATCC MYA-4617 / FGSC 8958) (Rice blast fungus)).